The following is a 213-amino-acid chain: StAR-related lipid transfer protein 5 (213 aa).

Positions 1–213 constitute an START domain; it reads MDPALAAQMS…LQKAVKQFHE (213 aa).

May be involved in the intracellular transport of sterols or other lipids. May bind cholesterol or other sterols. This Homo sapiens (Human) protein is StAR-related lipid transfer protein 5 (STARD5).